The following is a 607-amino-acid chain: Replication protein E1 (607 aa).

Positions 81–83 match the Nuclear localization signal motif; it reads KRK. Phosphoserine; by host is present on residues serine 87 and serine 95. The short motif at 94–103 is the Nuclear export signal element; sequence LSPRLQSLNL. Residues 147 to 310 are DNA-binding region; the sequence is QGGVGLGHIE…TMIQHQTADS (164 aa). Residues 409-559 form the SF3 helicase domain; that stretch reads LNFIVFLDKF…FPFDSDDKPL (151 aa). Residue 435–442 participates in ATP binding; it reads GPPDTGKS. Residue lysine 516 forms a Glycyl lysine isopeptide (Lys-Gly) (interchain with G-Cter in SUMO) linkage. The disordered stretch occupies residues 583 to 607; it reads QEDEGEDGSTQRTFQCTTRQVNGPV. The span at 590 to 607 shows a compositional bias: polar residues; that stretch reads GSTQRTFQCTTRQVNGPV.

Belongs to the papillomaviridae E1 protein family. As to quaternary structure, can form hexamers. Interacts with E2 protein; this interaction increases E1 DNA binding specificity. Interacts with host DNA polymerase subunit POLA2. Interacts with host single stranded DNA-binding protein RPA1. Interacts with host TOP1; this interaction stimulates the enzymatic activity of TOP1. In terms of processing, phosphorylated. Post-translationally, sumoylated.

It is found in the host nucleus. The catalysed reaction is Couples ATP hydrolysis with the unwinding of duplex DNA by translocating in the 3'-5' direction.. The enzyme catalyses ATP + H2O = ADP + phosphate + H(+). In terms of biological role, ATP-dependent DNA 3'-5' helicase required for initiation of viral DNA replication. It forms a complex with the viral E2 protein. The E1-E2 complex binds to the replication origin which contains binding sites for both proteins. During the initial step, a dimer of E1 interacts with a dimer of protein E2 leading to a complex that binds the viral origin of replication with high specificity. Then, a second dimer of E1 displaces the E2 dimer in an ATP-dependent manner to form the E1 tetramer. Following this, two E1 monomers are added to each half of the site, which results in the formation of two E1 trimers on the viral ori. Subsequently, two hexamers will be created. The double hexamer acts as a bi-directional helicase machinery and unwinds the viral DNA and then recruits the host DNA polymerase to start replication. This chain is Replication protein E1, found in Human papillomavirus 23.